Consider the following 211-residue polypeptide: Nucleoside triphosphate pyrophosphatase (211 aa).

Aspartate 76 acts as the Proton acceptor in catalysis.

Belongs to the Maf family. The cofactor is a divalent metal cation.

The protein localises to the cytoplasm. It catalyses the reaction a ribonucleoside 5'-triphosphate + H2O = a ribonucleoside 5'-phosphate + diphosphate + H(+). It carries out the reaction a 2'-deoxyribonucleoside 5'-triphosphate + H2O = a 2'-deoxyribonucleoside 5'-phosphate + diphosphate + H(+). Nucleoside triphosphate pyrophosphatase. May have a dual role in cell division arrest and in preventing the incorporation of modified nucleotides into cellular nucleic acids. The polypeptide is Nucleoside triphosphate pyrophosphatase (Saccharopolyspora erythraea (strain ATCC 11635 / DSM 40517 / JCM 4748 / NBRC 13426 / NCIMB 8594 / NRRL 2338)).